Consider the following 648-residue polypeptide: Leucine aminopeptidase 2 (648 aa).

Residues 143–145 (QCQ) and 269–274 (PYGGME) each bind a peptide. Residue H298 participates in Zn(2+) binding. The active-site Proton acceptor is the E299. Zn(2+) contacts are provided by H302 and E321. Y408 functions as the Proton donor in the catalytic mechanism.

This sequence belongs to the peptidase M1 family. Zn(2+) is required as a cofactor.

The protein localises to the cytoplasm. The protein resides in the nucleus. It carries out the reaction an epoxide + H2O = an ethanediol. In terms of biological role, aminopeptidase that preferentially cleaves di- and tripeptides. Also has low epoxide hydrolase activity (in vitro). Can hydrolyze the epoxide leukotriene LTA(4) but it forms preferentially 5,6-dihydroxy-7,9,11,14-eicosatetraenoic acid rather than the cytokine leukotriene B(4) as the product compared to the homologous mammalian enzyme (in vitro). The protein is Leucine aminopeptidase 2 of Lodderomyces elongisporus (strain ATCC 11503 / CBS 2605 / JCM 1781 / NBRC 1676 / NRRL YB-4239) (Yeast).